Here is a 1027-residue protein sequence, read N- to C-terminus: MYEGKHIHFSEVDNKPLCSYSPKLCKQRRLNGYAFCIRHVLEDKTAPFKQCEYVAKYNSQRCTNPIPKSEDRRYCNSHLQVLGFIPKKERKKKNDPIDEVKVRHQMDTMAFSLTVPTLALKMPNGLDGMSLSPPGARVPLHYLETELEDPFAFNEEDDDLKKGATVRKKLQSKLAQNRQRQRETEILKVRQEHFSPPPAPSQQQPPQQHSHLSPLSTSLKPPAPPQGSVCKSPQPQNTSLPMQGVAPTTHTIAQARQLSHKRPLPLLPSSRAPTVDPPRTDRILMKATAFSPHFSCISRLQRLVKLCTQKHQLDTDLFPHLGLDWSEESGEEPEDSEQASPYQVAWSIRETLRYQRHASDDDDAESRSSRVTQLCTYFQQKYKHLCRLERAESRQKKCRHTFRKALLQAASKEPECTGQLIQELRRAACSRTSISRTKLREVEPAACSGTVKGEQCANKALPFTRHCFQHILLNHSQQLFSSCTAKFADGQQCSVPVFDITHQTPLCEEHAKKMDNFLRGDNSRKVQHQQQRKPRKKTKPPALTKKHKKKRRRGPRRPQKPIPPAVPQGNLSMPASVSLPVEASHIRSPSTPELSADELPDDIANEITDIPHDLELNQEDFSDVLPRLPDDLQDFDFFEGKNGDLLPTTEEAEELERALQAVTSLECLSTIGVLAQSDGVPVQELSDRGIGVFSTGTGASGIQSLSREVNTDLGELLNGRIVHDNFSSLELDENLLRSATLSNPPTPLAGQIQGQFSAPANVGLTSATLISQSALGERAFPGQFHGLHDGSHASQRPHPAQLLSKADDLITSRQQYSSDHSHSSPHGSHYDSEHVPSPYSDHITSPHTTSYSGDNMAATFSAEMPIMAQHLLPTQLEVPLGGVVNPRTHWGNLPVNLGDPSPFSNLLGADGHLLSTSLSTPPTTSNSETTQPAFATVTPSSSSVLPGLPQTSFSGMGPSAELMASTSPKQQLPQFSAAFGHQLSSHSGIPKDLQPSHSSIAPPTGFTVTGATATSTNNASSPFPSPN.

Lys-87 is covalently cross-linked (Glycyl lysine isopeptide (Lys-Gly) (interchain with G-Cter in SUMO2)). The residue at position 132 (Ser-132) is a Phosphoserine. 5 disordered regions span residues 193–278 (HFSP…VDPP), 519–574 (RGDN…LSMP), 813–850 (RQQYSSDHSHSSPHGSHYDSEHVPSPYSDHITSPHTTS), 914–969 (LSTS…TSPK), and 982–1027 (QLSS…PSPN). Positions 201–216 (SQQQPPQQHSHLSPLS) are enriched in low complexity. Polar residues predominate over residues 229–257 (VCKSPQPQNTSLPMQGVAPTTHTIAQARQ). The span at 525 to 559 (KVQHQQQRKPRKKTKPPALTKKHKKKRRRGPRRPQ) shows a compositional bias: basic residues. Over residues 914–932 (LSTSLSTPPTTSNSETTQP) the composition is skewed to low complexity. A compositionally biased stretch (polar residues) spans 937 to 954 (VTPSSSSVLPGLPQTSFS). Over residues 1001–1027 (APPTGFTVTGATATSTNNASSPFPSPN) the composition is skewed to low complexity.

The protein belongs to the INO80D family. Component of the chromatin remodeling INO80 complex; specifically part of a complex module associated with the N-terminus of INO80.

The protein localises to the nucleus. Functionally, putative regulatory component of the chromatin remodeling INO80 complex which is involved in transcriptional regulation, DNA replication and probably DNA repair. This chain is INO80 complex subunit D, found in Homo sapiens (Human).